The sequence spans 91 residues: Small ribosomal subunit protein uS19 (91 aa).

It belongs to the universal ribosomal protein uS19 family.

In terms of biological role, protein S19 forms a complex with S13 that binds strongly to the 16S ribosomal RNA. The protein is Small ribosomal subunit protein uS19 of Marinobacter nauticus (strain ATCC 700491 / DSM 11845 / VT8) (Marinobacter aquaeolei).